Reading from the N-terminus, the 124-residue chain is Large ribosomal subunit protein eL31 (124 aa).

The protein belongs to the eukaryotic ribosomal protein eL31 family.

The sequence is that of Large ribosomal subunit protein eL31 (RpL31) from Spodoptera frugiperda (Fall armyworm).